Reading from the N-terminus, the 264-residue chain is Acyl-[acyl-carrier-protein]--UDP-N-acetylglucosamine O-acyltransferase (264 aa).

The protein belongs to the transferase hexapeptide repeat family. LpxA subfamily. In terms of assembly, homotrimer.

The protein resides in the cytoplasm. The enzyme catalyses a (3R)-hydroxyacyl-[ACP] + UDP-N-acetyl-alpha-D-glucosamine = a UDP-3-O-[(3R)-3-hydroxyacyl]-N-acetyl-alpha-D-glucosamine + holo-[ACP]. It functions in the pathway glycolipid biosynthesis; lipid IV(A) biosynthesis; lipid IV(A) from (3R)-3-hydroxytetradecanoyl-[acyl-carrier-protein] and UDP-N-acetyl-alpha-D-glucosamine: step 1/6. Its function is as follows. Involved in the biosynthesis of lipid A, a phosphorylated glycolipid that anchors the lipopolysaccharide to the outer membrane of the cell. The protein is Acyl-[acyl-carrier-protein]--UDP-N-acetylglucosamine O-acyltransferase of Rickettsia canadensis (strain McKiel).